Reading from the N-terminus, the 290-residue chain is Phosphonopyruvate hydrolase (290 aa).

Substrate is bound at residue 40 to 44; it reads WGSGF. The active-site Nucleophile is Asp-54. Asp-81 provides a ligand contact to Mg(2+). Residues Arg-155, His-186, and Arg-188 each contribute to the substrate site.

Homodimer. Homotetramer. Requires Co(2+) as cofactor. Mg(2+) is required as a cofactor. It depends on Mn(2+) as a cofactor.

The enzyme catalyses 3-phosphonopyruvate + H2O = pyruvate + phosphate + H(+). With respect to regulation, partially inhibited by EDTA. Activity is restored by Co(2+), and to a lesser extent by Ni(2+) and Mg(2+). Unaffected by Cs(2+) and Ca(2+). Activity is reduced by Mn(2+) and Cu(2+). Its function is as follows. Hydrolyzes phosphonopyruvate. Not active towards phosphoenolpyruvate, glycerophosphate, phospho-L-serine or phosphoglycolic acid. The polypeptide is Phosphonopyruvate hydrolase (Variovorax sp. (strain Pal2)).